A 226-amino-acid polypeptide reads, in one-letter code: ATP synthase F(0) complex subunit a (226 aa).

The next 7 membrane-spanning stretches (helical) occupy residues Ser-11–Ile-31, Leu-37–Met-54, Leu-72–Phe-92, Leu-98–Thr-118, Ile-138–Val-158, Thr-178–Leu-198, and Leu-199–Ile-219.

Belongs to the ATPase A chain family. Component of the ATP synthase complex composed at least of ATP5F1A/subunit alpha, ATP5F1B/subunit beta, ATP5MC1/subunit c (homooctomer), MT-ATP6/subunit a, MT-ATP8/subunit 8, ATP5ME/subunit e, ATP5MF/subunit f, ATP5MG/subunit g, ATP5MK/subunit k, ATP5MJ/subunit j, ATP5F1C/subunit gamma, ATP5F1D/subunit delta, ATP5F1E/subunit epsilon, ATP5PF/subunit F6, ATP5PB/subunit b, ATP5PD/subunit d, ATP5PO/subunit OSCP. ATP synthase complex consists of a soluble F(1) head domain (subunits alpha(3) and beta(3)) - the catalytic core - and a membrane F(0) domain - the membrane proton channel (subunits c, a, 8, e, f, g, k and j). These two domains are linked by a central stalk (subunits gamma, delta, and epsilon) rotating inside the F1 region and a stationary peripheral stalk (subunits F6, b, d, and OSCP). Interacts with DNAJC30; interaction is direct.

Its subcellular location is the mitochondrion inner membrane. The catalysed reaction is H(+)(in) = H(+)(out). Functionally, subunit a, of the mitochondrial membrane ATP synthase complex (F(1)F(0) ATP synthase or Complex V) that produces ATP from ADP in the presence of a proton gradient across the membrane which is generated by electron transport complexes of the respiratory chain. ATP synthase complex consist of a soluble F(1) head domain - the catalytic core - and a membrane F(1) domain - the membrane proton channel. These two domains are linked by a central stalk rotating inside the F(1) region and a stationary peripheral stalk. During catalysis, ATP synthesis in the catalytic domain of F(1) is coupled via a rotary mechanism of the central stalk subunits to proton translocation. With the subunit c (ATP5MC1), forms the proton-conducting channel in the F(0) domain, that contains two crucial half-channels (inlet and outlet) that facilitate proton movement from the mitochondrial intermembrane space (IMS) into the matrix. Protons are taken up via the inlet half-channel and released through the outlet half-channel, following a Grotthuss mechanism. The polypeptide is ATP synthase F(0) complex subunit a (Lycodon semicarinatus (Ryukyu odd-tooth snake)).